Reading from the N-terminus, the 222-residue chain is MIF4G domain-containing protein (222 aa).

In terms of domain architecture, MIF4G spans E3–G205.

It belongs to the MIF4GD family. Interacts with EIF4G1, EIF4G2 and SLBP; probably tethered by SLBP to the 3'-end of mRNAs ending with the histone stem-loop, it also interacts with EIF4G1 which is bound to their 5'-end.

The protein resides in the cytoplasm. It localises to the nucleus. Its function is as follows. Functions in replication-dependent translation of histone mRNAs which differ from other eukaryotic mRNAs in that they do not end with a poly-A tail but a stem-loop. May participate in circularizing those mRNAs specifically enhancing their translation. In Bos taurus (Bovine), this protein is MIF4G domain-containing protein (MIF4GD).